A 309-amino-acid chain; its full sequence is Taste receptor type 2 member 46 (309 aa).

A topological domain (extracellular) is located at residue Met-1. A helical membrane pass occupies residues 2–22 (ITFLPIIFSILIVVTFVIGNF). The Cytoplasmic segment spans residues 23–46 (ANGFIALANSIEWFKRQKISFADQ). Residues 47–67 (ILTALAVSRVGLLWVLLLNWY) traverse the membrane as a helical segment. The Extracellular segment spans residues 68 to 86 (ATELNPAFYSIEVRITAYN). The chain crosses the membrane as a helical span at residues 87 to 107 (LWAVINHFSNWLATSLSIFYL). The Cytoplasmic portion of the chain corresponds to 108-126 (LKIANFSNLIFLCLKRRVK). A helical membrane pass occupies residues 127-147 (SVVLVILLGPLLFLVCHLFVI). At 148 to 178 (NMNQIIWTKEYEGNMTWKIKLRSAMYLSNTT) the chain is on the extracellular side. Residues Asn-161 and Asn-176 are each glycosylated (N-linked (GlcNAc...) asparagine). Residues 179–199 (VTILANLVPFTLTLISFLLLI) traverse the membrane as a helical segment. Residues 200–229 (CSLCKHLEKMQLHGKGSQDPSMKVHIKALQ) lie on the Cytoplasmic side of the membrane. The helical transmembrane segment at 230–250 (TVTSFLLLCAIYFLSIIMSVW) threads the bilayer. The Extracellular segment spans residues 251–259 (SFESLENKP). The chain crosses the membrane as a helical span at residues 260 to 280 (VFMFCEAITFSYPSTHPFILI). Topologically, residues 281–309 (WGNKKLKQTFLSVLWHVRYWVKGEKPSXP) are cytoplasmic.

This sequence belongs to the G-protein coupled receptor T2R family.

It is found in the membrane. It localises to the cell projection. The protein resides in the cilium membrane. Its function is as follows. Receptor that may play a role in the perception of bitterness and is gustducin-linked. May play a role in sensing the chemical composition of the gastrointestinal content. The activity of this receptor may stimulate alpha gustducin, mediate PLC-beta-2 activation and lead to the gating of TRPM5. In airway epithelial cells, binding of bitter compounds increases the intracellular calcium ion concentration and stimulates ciliary beat frequency. This is Taste receptor type 2 member 46 (TAS2R46) from Pan troglodytes (Chimpanzee).